Here is a 253-residue protein sequence, read N- to C-terminus: Testis-expressed protein 101 (253 aa).

The first 24 residues, 1–24, serve as a signal peptide directing secretion; sequence MAACWVHYLLLLLLGVSHQTLAQS. 5 N-linked (GlcNAc...) asparagine glycosylation sites follow: asparagine 44, asparagine 112, asparagine 117, asparagine 121, and asparagine 162. In terms of domain architecture, UPAR/Ly6 1 spans 53–117; sequence ETCNPGELCQ…SNYCNSSLCN (65 aa). Residues 143–218 enclose the UPAR/Ly6 2 domain; the sequence is CPTCVALGSC…KETCSYHSLL (76 aa). A lipid anchor (GPI-anchor amidated serine) is attached at serine 226. Residues 227–253 constitute a propeptide, removed in mature form; the sequence is RASGRSTSLWVLELLLPAVLVALTHFP.

Interacts with VAMP3. Interacts with LY6K. Interacts with DPEP3; co-localized on the cell surface of spermatocytes, spermatids, and testicular spermatozoa, co-localized only in cytoplasmic droplets of caput and corpus epididymal sperm. Interacts with ADAM5. In terms of processing, N-glycosylated; by high mannose and/or biantennary complex and/or certain types of hybrid oligosaccharides; possesses different oligosaccharides chains according to its subcellular localization in the testis. Sheds from membrane raft by ACE and released from the cell surface of epididymal sperm while it passes through the caput epididymis leading to disappearance of TEX101 on spermatozoa; is essential to produce fertile spermatozoa.

It localises to the cell membrane. It is found in the membrane raft. The protein localises to the cytoplasmic vesicle. Its subcellular location is the secretory vesicle. The protein resides in the acrosome. It localises to the secreted. Functionally, plays a role in fertilization by controlling binding of sperm to zona pellucida and migration of spermatozoa into the oviduct. May play a role in signal transduction and promote protein tyrosine phosphorylation. The chain is Testis-expressed protein 101 from Cricetulus griseus (Chinese hamster).